Consider the following 407-residue polypeptide: uncharacterized protein (407 aa).

12 helical membrane passes run 22 to 42, 51 to 71, 101 to 121, 126 to 146, 154 to 174, 179 to 199, 227 to 247, 258 to 278, 286 to 306, 309 to 329, 347 to 367, and 369 to 389; these read IVSV…PLAV, LGFS…ATLA, ALLL…GLLV, VLGI…IGRV, VISW…PVGV, ALIP…GYYL, GLGL…ITLY, LSLT…ANTI, VAIV…LAPV, VALV…PALG, AYSV…GYVA, and AFGY…GVAL.

This sequence belongs to the major facilitator superfamily. YhhS family.

It is found in the cell inner membrane. This is an uncharacterized protein from Burkholderia mallei (strain NCTC 10229).